The primary structure comprises 396 residues: Bone morphogenetic protein 2 (396 aa).

Positions 1–23 (MVAGTRCLLALLLPQVLLGGAAG) are cleaved as a signal peptide. A propeptide spans 24 to 282 (LIPELGRRKF…GHPLHRREKR (259 aa)) (cleaved by PCSK5). Position 87 is a phosphoserine (Ser-87). N-linked (GlcNAc...) asparagine glycans are attached at residues Asn-135, Asn-163, Asn-164, and Asn-200. Residues 272-293 (KGHPLHRREKRQAKHKQRKRLK) are disordered. Over residues 274–293 (HPLHRREKRQAKHKQRKRLK) the composition is skewed to basic residues. 3 disulfide bridges follow: Cys-296/Cys-361, Cys-325/Cys-393, and Cys-329/Cys-395. Residue Asn-338 is glycosylated (N-linked (GlcNAc...) asparagine).

It belongs to the TGF-beta family. In terms of assembly, homodimer; disulfide-linked. Interacts with SOSTDC1. Interacts with GREM2, RGMA, RGMB and RGMC. Interacts with ASPN. Interacts with MAFP5. Interacts with FBN1 (via N-terminal domain) and FBN2. Interacts with type I receptor BMPR1A. Interacts with type II receptor BMPR2. Interacts with ERFE. Interacts with BMPR1A/ALK3; the interaction may induce HAMP expression. Interacts with TGFBR3.

The protein resides in the secreted. Growth factor of the TGF-beta superfamily that plays essential roles in many developmental processes, including cardiogenesis, neurogenesis, and osteogenesis. Induces cartilage and bone formation. Initiates the canonical BMP signaling cascade by associating with type I receptor BMPR1A and type II receptor BMPR2. Once all three components are bound together in a complex at the cell surface, BMPR2 phosphorylates and activates BMPR1A. In turn, BMPR1A propagates signal by phosphorylating SMAD1/5/8 that travel to the nucleus and act as activators and repressors of transcription of target genes. Also acts to promote expression of HAMP, via the interaction with its receptor BMPR1A/ALK3. Can also signal through non-canonical pathways such as ERK/MAP kinase signaling cascade that regulates osteoblast differentiation. Also stimulates the differentiation of myoblasts into osteoblasts via the EIF2AK3-EIF2A-ATF4 pathway by stimulating EIF2A phosphorylation which leads to increased expression of ATF4 which plays a central role in osteoblast differentiation. Acts as a positive regulator of odontoblast differentiation during mesenchymal tooth germ formation, expression is repressed during the bell stage by MSX1-mediated inhibition of CTNNB1 signaling. This chain is Bone morphogenetic protein 2 (BMP2), found in Dama dama (Fallow deer).